Reading from the N-terminus, the 917-residue chain is Protein translocase subunit SecA (917 aa).

ATP-binding positions include Gln87, 105-109 (GEGKT), and Asp516. Positions 901, 903, 912, and 913 each coordinate Zn(2+).

Belongs to the SecA family. In terms of assembly, monomer and homodimer. Part of the essential Sec protein translocation apparatus which comprises SecA, SecYEG and auxiliary proteins SecDF-YajC and YidC. It depends on Zn(2+) as a cofactor.

Its subcellular location is the cell inner membrane. It localises to the cytoplasm. The enzyme catalyses ATP + H2O + cellular proteinSide 1 = ADP + phosphate + cellular proteinSide 2.. Functionally, part of the Sec protein translocase complex. Interacts with the SecYEG preprotein conducting channel. Has a central role in coupling the hydrolysis of ATP to the transfer of proteins into and across the cell membrane, serving both as a receptor for the preprotein-SecB complex and as an ATP-driven molecular motor driving the stepwise translocation of polypeptide chains across the membrane. The chain is Protein translocase subunit SecA from Acidovorax sp. (strain JS42).